The following is a 790-amino-acid chain: Endonuclease MutS2 (790 aa).

An ATP-binding site is contributed by 334 to 341; that stretch reads GPNTGGKT. The 76-residue stretch at 713–788 folds into the Smr domain; sequence LDVRGMTLDD…GDGVTIVELH (76 aa).

The protein belongs to the DNA mismatch repair MutS family. MutS2 subfamily. Homodimer. Binds to stalled ribosomes, contacting rRNA.

Its function is as follows. Endonuclease that is involved in the suppression of homologous recombination and thus may have a key role in the control of bacterial genetic diversity. Acts as a ribosome collision sensor, splitting the ribosome into its 2 subunits. Detects stalled/collided 70S ribosomes which it binds and splits by an ATP-hydrolysis driven conformational change. Acts upstream of the ribosome quality control system (RQC), a ribosome-associated complex that mediates the extraction of incompletely synthesized nascent chains from stalled ribosomes and their subsequent degradation. Probably generates substrates for RQC. In Caldanaerobacter subterraneus subsp. tengcongensis (strain DSM 15242 / JCM 11007 / NBRC 100824 / MB4) (Thermoanaerobacter tengcongensis), this protein is Endonuclease MutS2.